The following is a 461-amino-acid chain: CBL-interacting protein kinase 1 (461 aa).

The Protein kinase domain occupies 19 to 274 (YEIGRTLGEG…IAGIKEHEWF (256 aa)). Residues 25-33 (LGEGNFGKV) and Lys-48 contribute to the ATP site. The active-site Proton acceptor is Asp-142. The activation loop stretch occupies residues 160–189 (DFGLSALPQHLGNDGLLHTTCGSPNYIAPE). In terms of domain architecture, NAF spans 308 to 332 (EKPTHINAFQLIGMASALDLSGFFE). The tract at residues 338–367 (QRKIRFTSTHSPKDLFDKIENVVTEMGFQV) is PPI.

Belongs to the protein kinase superfamily. CAMK Ser/Thr protein kinase family. SNF1 subfamily. The cofactor is Mn(2+).

It carries out the reaction L-seryl-[protein] + ATP = O-phospho-L-seryl-[protein] + ADP + H(+). The enzyme catalyses L-threonyl-[protein] + ATP = O-phospho-L-threonyl-[protein] + ADP + H(+). Functionally, CIPK serine-threonine protein kinases interact with CBL proteins. Binding of a CBL protein to the regulatory NAF domain of CIPK protein lead to the activation of the kinase in a calcium-dependent manner. This Oryza sativa subsp. japonica (Rice) protein is CBL-interacting protein kinase 1 (CIPK1).